The sequence spans 606 residues: Maternal effect protein oskar (606 aa).

Residues 152–221 (EYPDIDSEVR…SGKRIFNLKA (70 aa)) enclose the HTH OST-type domain. Phosphoserine is present on residues serine 270 and serine 275. Residues 425–439 (LMGDDFMLYLARMEL) are leucine-zipper.

As to quaternary structure, interacts with smaug (smg). Interacts with yl/yolkless. Begins to accumulate at the posterior pole of the oocyte from stage 8 onwards.

Its subcellular location is the endosome. Functionally, organizes the germ plasm and directs localization of the posterior determinant nanos. Oskar protein is required to keep nanos (nos) RNA and staufen protein at the posterior pole. In Drosophila melanogaster (Fruit fly), this protein is Maternal effect protein oskar (osk).